Here is a 355-residue protein sequence, read N- to C-terminus: Alpha-N-acetylneuraminide alpha-2,8-sialyltransferase (355 aa).

The Cytoplasmic segment spans residues 1–28 (MSPCGRALHTSRGAMAMLARKFPRTRLP). Residues 29 to 47 (VGASALCVVVLCWLYIFPV) form a helical; Signal-anchor for type II membrane protein membrane-spanning segment. The Lumenal segment spans residues 48–355 (YRLPNEKEIV…CEEPSPQPTS (308 aa)). Residues asparagine 70 and asparagine 118 are each glycosylated (N-linked (GlcNAc...) asparagine). 2 disulfide bridges follow: cysteine 137/cysteine 286 and cysteine 151/cysteine 346. The CMP-N-acetyl-beta-neuraminate site is built by asparagine 142 and asparagine 165. N-linked (GlcNAc...) asparagine glycans are attached at residues asparagine 213 and asparagine 244. Positions 273, 274, 275, 295, and 309 each coordinate CMP-N-acetyl-beta-neuraminate. The active-site Proton donor/acceptor is histidine 321.

The protein belongs to the glycosyltransferase 29 family.

It localises to the golgi apparatus membrane. The enzyme catalyses an N-acetyl-alpha-neuraminyl-(2-&gt;3)-beta-D-galactosyl derivative + CMP-N-acetyl-beta-neuraminate = an N-acetyl-alpha-neuraminyl-(2-&gt;8)-N-acetyl-alpha-neuraminyl-(2-&gt;3)-beta-D-galactosyl derivative + CMP + H(+). The catalysed reaction is a ganglioside GM3 (d18:1(4E)) + CMP-N-acetyl-beta-neuraminate = a ganglioside GD3 (d18:1(4E)) + CMP + H(+). It catalyses the reaction a ganglioside GD3 (d18:1(4E)) + CMP-N-acetyl-beta-neuraminate = a ganglioside GT3 (d18:1(4E)) + CMP + H(+). It carries out the reaction a ganglioside GD1a (d18:1(4E)) + CMP-N-acetyl-beta-neuraminate = a ganglioside GT1a (d18:1(4E)) + CMP + H(+). The enzyme catalyses a ganglioside GT1b (d18:1(4E)) + CMP-N-acetyl-beta-neuraminate = a ganglioside GQ1b (d18:1(4E)) + CMP + H(+). The catalysed reaction is a ganglioside GM1b (d18:1(4E)) + CMP-N-acetyl-beta-neuraminate = a ganglioside GD1c (d18:1(4E)) + CMP + H(+). It catalyses the reaction a ganglioside GD3 + CMP-N-acetyl-beta-neuraminate = a ganglioside GT3 + CMP + H(+). It carries out the reaction [alpha-N-acetylneuraminyl-(2-&gt;8)](n)-alpha-N-acetylneuraminyl-(2-&gt;8)-alpha-N-acetylneuraminyl-(2-&gt;3)-beta-D-galactosyl-(1-&gt;4)-beta-D-glucosyl-(1&lt;-&gt;1)-ceramide + CMP-N-acetyl-beta-neuraminate = [alpha-N-acetylneuraminyl-(2-&gt;8)](n+1)-alpha-N-acetylneuraminyl-(2-&gt;8)-alpha-N-acetylneuraminyl-(2-&gt;3)-beta-D-galactosyl-(1-&gt;4)-beta-D-glucosyl-(1&lt;-&gt;1)-ceramide + CMP + H(+). The protein operates within protein modification; protein glycosylation. Its pathway is lipid metabolism; sphingolipid metabolism. Catalyzes the addition of sialic acid in alpha 2,8-linkage to the sialic acid moiety of the ganglioside GM3 to form ganglioside GD3; gangliosides are a subfamily of complex glycosphingolipds that contain one or more residues of sialic acid. Can catalyze the addition of a second alpha-2,8- sialic acid to GD3 to form GT3. Can use GM1b, GD1a and GT1b as acceptor substrates to synthesize GD1c, GT1a and GQ1b respectively. This chain is Alpha-N-acetylneuraminide alpha-2,8-sialyltransferase, found in Mus musculus (Mouse).